A 433-amino-acid polypeptide reads, in one-letter code: Meiotically up-regulated gene 131 protein (433 aa).

A compositionally biased stretch (polar residues) spans 401–412 (LSSQGREISNTL). The interval 401–433 (LSSQGREISNTLSRKRGAKGSNPFEIENMMPHA) is disordered.

Belongs to the UPF0300 family.

The protein resides in the golgi apparatus. Its function is as follows. Has a role in meiosis. This is Meiotically up-regulated gene 131 protein (mug131) from Schizosaccharomyces pombe (strain 972 / ATCC 24843) (Fission yeast).